The chain runs to 68 residues: Beta-defensin 1 (68 aa).

A signal peptide spans 1-21 (MRTSYLLLFTLCLLLSEMASG). Residues 22-32 (DNFLTGLGHRS) constitute a propeptide that is removed on maturation. Disulfide bonds link Cys37–Cys66, Cys44–Cys59, and Cys49–Cys67.

This sequence belongs to the beta-defensin family. Monomer. Homodimer.

Its subcellular location is the secreted. It is found in the membrane. Functionally, has bactericidal activity. May act as a ligand for C-C chemokine receptor CCR6. Positively regulates the sperm motility and bactericidal activity in a CCR6-dependent manner. Binds to CCR6 and triggers Ca2+ mobilization in the sperm which is important for its motility. This Hylobates moloch (Silvery gibbon) protein is Beta-defensin 1 (DEFB1).